Reading from the N-terminus, the 258-residue chain is UPF0246 protein CGSHiEE_07045 (258 aa).

The protein belongs to the UPF0246 family.

This is UPF0246 protein CGSHiEE_07045 from Haemophilus influenzae (strain PittEE).